A 251-amino-acid polypeptide reads, in one-letter code: MTEAQRHQILLDMLAQLGFVTVENVIERLGISPATARRDINKLDESGKLKKVRNGAEAITQQRPRWTPMNLHQAQNHDEKVRIAKAASQLVNPGESVVINCGSTAFLLGREMCGKPVQIITNYLPLANYLIDQEHDSVIIMGGQYNKSQSITLSPQGSENSLYAGHWMFTSGKGLTADGLYKTDMLTAMAEQKMLSVVGKLVALVDSSKIGERAGMLFSRADQIAMLITGKNANPQVLQQLEAQGVSILRV.

In terms of domain architecture, HTH deoR-type spans 3 to 58 (EAQRHQILLDMLAQLGFVTVENVIERLGISPATARRDINKLDESGKLKKVRNGAEA). The H-T-H motif DNA-binding region spans 20-39 (VTVENVIERLGISPATARRD).

It localises to the cytoplasm. Represses ulaG and the ulaABCDEF operon. The sequence is that of HTH-type transcriptional regulator UlaR from Salmonella agona (strain SL483).